Reading from the N-terminus, the 275-residue chain is Mitochondrial outer membrane porin (275 aa).

This sequence belongs to the eukaryotic mitochondrial porin (TC 1.B.8.1) family.

It is found in the mitochondrion outer membrane. In terms of biological role, forms a channel through the cell membrane that allows diffusion of small hydrophilic molecules. The channel adopts an open conformation at low or zero membrane potential and a closed conformation at potentials above 30-40 mV. The open state has a weak anion selectivity whereas the closed state is cation-selective. The protein is Mitochondrial outer membrane porin (VDAC1) of Triticum aestivum (Wheat).